Reading from the N-terminus, the 287-residue chain is Large ribosomal subunit protein uL2 (287 aa).

Residues 221 to 287 (RGSVMNPCDH…SKRSRGGRDS (67 aa)) are disordered. Over residues 258 to 287 (KTRKKNKPSNKLVVRRRRRISKRSRGGRDS) the composition is skewed to basic residues.

The protein belongs to the universal ribosomal protein uL2 family. As to quaternary structure, part of the 50S ribosomal subunit. Forms a bridge to the 30S subunit in the 70S ribosome.

In terms of biological role, one of the primary rRNA binding proteins. Required for association of the 30S and 50S subunits to form the 70S ribosome, for tRNA binding and peptide bond formation. It has been suggested to have peptidyltransferase activity; this is somewhat controversial. Makes several contacts with the 16S rRNA in the 70S ribosome. This chain is Large ribosomal subunit protein uL2, found in Prochlorococcus marinus (strain MIT 9301).